A 201-amino-acid chain; its full sequence is Recombination protein RecR (201 aa).

The C4-type zinc-finger motif lies at 57-72 (CADCRTFTEQEICTIC). The Toprim domain occupies 81–176 (GLICVVESPA…DASRIAHGVP (96 aa)).

This sequence belongs to the RecR family.

Its function is as follows. May play a role in DNA repair. It seems to be involved in an RecBC-independent recombinational process of DNA repair. It may act with RecF and RecO. This is Recombination protein RecR from Erwinia tasmaniensis (strain DSM 17950 / CFBP 7177 / CIP 109463 / NCPPB 4357 / Et1/99).